A 236-amino-acid polypeptide reads, in one-letter code: Ribose-5-phosphate isomerase (236 aa).

Substrate is bound by residues 27–30 (TGST), 84–87 (DGTD), and 97–100 (KGRG). The active-site Proton acceptor is Glu-106. Substrate is bound at residue Lys-124.

This sequence belongs to the ribose 5-phosphate isomerase family. In terms of assembly, homodimer.

The enzyme catalyses aldehydo-D-ribose 5-phosphate = D-ribulose 5-phosphate. The protein operates within carbohydrate degradation; pentose phosphate pathway; D-ribose 5-phosphate from D-ribulose 5-phosphate (non-oxidative stage): step 1/1. Its function is as follows. Involved in the first step of the non-oxidative branch of the pentose phosphate pathway. It catalyzes the reversible conversion of ribose-5-phosphate to ribulose 5-phosphate. The polypeptide is Ribose-5-phosphate isomerase (Plasmodium falciparum (isolate 3D7)).